Here is a 239-residue protein sequence, read N- to C-terminus: Pyridoxine 5'-phosphate synthase (239 aa).

Position 7 (asparagine 7) interacts with 3-amino-2-oxopropyl phosphate. Residue 9 to 10 (DH) coordinates 1-deoxy-D-xylulose 5-phosphate. Residue arginine 18 coordinates 3-amino-2-oxopropyl phosphate. The active-site Proton acceptor is the histidine 43. The 1-deoxy-D-xylulose 5-phosphate site is built by arginine 45 and histidine 50. Glutamate 70 functions as the Proton acceptor in the catalytic mechanism. Residue threonine 100 coordinates 1-deoxy-D-xylulose 5-phosphate. Histidine 191 acts as the Proton donor in catalysis. 3-amino-2-oxopropyl phosphate is bound by residues glycine 192 and 213 to 214 (GH).

It belongs to the PNP synthase family. Homooctamer; tetramer of dimers.

It localises to the cytoplasm. The catalysed reaction is 3-amino-2-oxopropyl phosphate + 1-deoxy-D-xylulose 5-phosphate = pyridoxine 5'-phosphate + phosphate + 2 H2O + H(+). It participates in cofactor biosynthesis; pyridoxine 5'-phosphate biosynthesis; pyridoxine 5'-phosphate from D-erythrose 4-phosphate: step 5/5. Its function is as follows. Catalyzes the complicated ring closure reaction between the two acyclic compounds 1-deoxy-D-xylulose-5-phosphate (DXP) and 3-amino-2-oxopropyl phosphate (1-amino-acetone-3-phosphate or AAP) to form pyridoxine 5'-phosphate (PNP) and inorganic phosphate. The polypeptide is Pyridoxine 5'-phosphate synthase (Trichormus variabilis (strain ATCC 29413 / PCC 7937) (Anabaena variabilis)).